The following is a 145-amino-acid chain: Selenoprotein M (145 aa).

Positions 1-23 are cleaved as a signal peptide; sequence MSLLLPPLALLLLLAALVAPATA. Catalysis depends on nucleophile residues cysteine 45 and selenocysteine 48. The segment at residues 45–48 is a cross-link (cysteinyl-selenocysteine (Cys-Sec)); that stretch reads CGGU. Residue selenocysteine 48 is a non-standard amino acid, selenocysteine.

It belongs to the selenoprotein M/F family. Widely expressed.

The protein localises to the cytoplasm. It is found in the perinuclear region. The protein resides in the endoplasmic reticulum. It localises to the golgi apparatus. May function as a thiol-disulfide oxidoreductase that participates in disulfide bond formation. The chain is Selenoprotein M from Homo sapiens (Human).